The sequence spans 288 residues: Very-long-chain (3R)-3-hydroxyacyl-CoA dehydratase 1 (288 aa).

Residues M1–R59 are disordered. At M1 to W75 the chain is on the cytoplasmic side. A helical membrane pass occupies residues L76–V95. Over R96 to T114 the chain is Lumenal. The helical transmembrane segment at L115–I131 threads the bilayer. At G132–A141 the chain is on the cytoplasmic side. The chain crosses the membrane as a helical span at residues G142–I159. At K160–E165 the chain is on the lumenal side. A helical membrane pass occupies residues E166–I180. Residues T181 to Y203 lie on the Cytoplasmic side of the membrane. A helical membrane pass occupies residues N204–I221. Catalysis depends on residues Y210 and E217. Topologically, residues Y222–F251 are lumenal. N-linked (GlcNAc...) asparagine glycosylation occurs at N243. Residues L252–H269 traverse the membrane as a helical segment. The Cytoplasmic portion of the chain corresponds to M270 to D288.

Belongs to the very long-chain fatty acids dehydratase HACD family. In terms of assembly, may interact with enzymes of the ELO family (including ELOVL1); with those enzymes that mediate condensation, the first of the four steps of the reaction cycle responsible for fatty acids elongation, may be part of a larger fatty acids elongase complex. Interacts with TECR. In terms of processing, N-glycosylated. As to expression, expressed in heart.

Its subcellular location is the endoplasmic reticulum membrane. It carries out the reaction a very-long-chain (3R)-3-hydroxyacyl-CoA = a very-long-chain (2E)-enoyl-CoA + H2O. The catalysed reaction is (3R)-hydroxyhexadecanoyl-CoA = (2E)-hexadecenoyl-CoA + H2O. It catalyses the reaction (3R)-hydroxyoctadecanoyl-CoA = (2E)-octadecenoyl-CoA + H2O. The enzyme catalyses (3R)-hydroxyeicosanoyl-CoA = (2E)-eicosenoyl-CoA + H2O. It carries out the reaction (3R)-hydroxydocosanoyl-CoA = (2E)-docosenoyl-CoA + H2O. The catalysed reaction is (3R)-hydroxytetracosanoyl-CoA = (2E)-tetracosenoyl-CoA + H2O. It catalyses the reaction (3R)-hydroxyhexacosanoyl-CoA = (2E)-hexacosenoyl-CoA + H2O. Its pathway is lipid metabolism; fatty acid biosynthesis. Functionally, catalyzes the third of the four reactions of the long-chain fatty acids elongation cycle. This endoplasmic reticulum-bound enzymatic process, allows the addition of two carbons to the chain of long- and very long-chain fatty acids/VLCFAs per cycle. This enzyme catalyzes the dehydration of the 3-hydroxyacyl-CoA intermediate into trans-2,3-enoyl-CoA, within each cycle of fatty acid elongation. Thereby, it participates in the production of VLCFAs of different chain lengths that are involved in multiple biological processes as precursors of membrane lipids and lipid mediators. In Ovis aries (Sheep), this protein is Very-long-chain (3R)-3-hydroxyacyl-CoA dehydratase 1 (HACD1).